Consider the following 73-residue polypeptide: uncharacterized protein (73 aa).

An N-terminal signal peptide occupies residues 1–30 (MVDFYFIEEKVAYRAAFTTTGKIAATLGLA).

This is an uncharacterized protein from Archaeoglobus fulgidus (strain ATCC 49558 / DSM 4304 / JCM 9628 / NBRC 100126 / VC-16).